A 275-amino-acid polypeptide reads, in one-letter code: Dermonecrotic toxin SpeSicTox-betaIIA2iii (275 aa).

His-5 is a catalytic residue. Residues Glu-25 and Asp-27 each contribute to the Mg(2+) site. Catalysis depends on His-41, which acts as the Nucleophile. Cystine bridges form between Cys-45–Cys-51 and Cys-47–Cys-190. Mg(2+) is bound at residue Asp-85.

It belongs to the arthropod phospholipase D family. Class II subfamily. The cofactor is Mg(2+). As to expression, expressed by the venom gland.

The protein localises to the secreted. The enzyme catalyses an N-(acyl)-sphingosylphosphocholine = an N-(acyl)-sphingosyl-1,3-cyclic phosphate + choline. It catalyses the reaction an N-(acyl)-sphingosylphosphoethanolamine = an N-(acyl)-sphingosyl-1,3-cyclic phosphate + ethanolamine. The catalysed reaction is a 1-acyl-sn-glycero-3-phosphocholine = a 1-acyl-sn-glycero-2,3-cyclic phosphate + choline. It carries out the reaction a 1-acyl-sn-glycero-3-phosphoethanolamine = a 1-acyl-sn-glycero-2,3-cyclic phosphate + ethanolamine. Dermonecrotic toxins cleave the phosphodiester linkage between the phosphate and headgroup of certain phospholipids (sphingolipid and lysolipid substrates), forming an alcohol (often choline) and a cyclic phosphate. This toxin acts on sphingomyelin (SM). It may also act on ceramide phosphoethanolamine (CPE), lysophosphatidylcholine (LPC) and lysophosphatidylethanolamine (LPE), but not on lysophosphatidylserine (LPS), and lysophosphatidylglycerol (LPG). It acts by transphosphatidylation, releasing exclusively cyclic phosphate products as second products. Induces dermonecrosis, hemolysis, increased vascular permeability, edema, inflammatory response, and platelet aggregation. This Sicarius peruensis (Six-eyed sand spider) protein is Dermonecrotic toxin SpeSicTox-betaIIA2iii.